The chain runs to 914 residues: Ubiquitin carboxyl-terminal hydrolase 20 (914 aa).

Residues 6–111 (DLCPHLDSIG…GSSSKFSEQD (106 aa)) form a UBP-type zinc finger. Zn(2+) is bound by residues Cys8, His10, Cys30, Cys33, Cys43, Cys48, Cys53, His60, His64, His70, Cys83, and Cys86. Ser112, Ser132, and Ser134 each carry phosphoserine. The USP domain maps to 145–685 (TGMKNLGNSC…EGYVLFYRKS (541 aa)). Catalysis depends on Cys154, which acts as the Nucleophile. Disordered regions lie at residues 257–347 (LTEA…VDED) and 360–415 (QPAE…ASPV). A Phosphothreonine modification is found at Thr258. A compositionally biased stretch (basic and acidic residues) spans 259–279 (EARDSDSSDTDEKREGDRSPS). Residue Ser305 is modified to Phosphoserine. The segment covering 316–332 (EAGRAISEKERMKDRKF) has biased composition (basic and acidic residues). Residue Ser368 is modified to Phosphoserine. The residue at position 377 (Thr377) is a Phosphothreonine. Phosphoserine is present on residues Ser408 and Ser413. Residue His643 is the Proton acceptor of the active site. 2 DUSP domains span residues 687–780 (EEAM…LYVC) and 789–892 (ALAK…RQSV).

The protein belongs to the peptidase C19 family. USP20/USP33 subfamily. Interacts with VHL, leading to its ubiquitination and subsequent degradation. Interacts with CCP110. Interacts with DIO2. Interacts with HIF1A. Interacts with ADRB2. Interacts with USP18. Post-translationally, ubiquitinated via a VHL-dependent pathway for proteasomal degradation.

The protein localises to the cytoplasm. It is found in the endoplasmic reticulum. It localises to the perinuclear region. Its subcellular location is the cytoskeleton. The protein resides in the microtubule organizing center. The protein localises to the centrosome. It catalyses the reaction Thiol-dependent hydrolysis of ester, thioester, amide, peptide and isopeptide bonds formed by the C-terminal Gly of ubiquitin (a 76-residue protein attached to proteins as an intracellular targeting signal).. Its function is as follows. Deubiquitinating enzyme that plays a role in many cellular processes including autophagy, cellular antiviral response or membrane protein biogenesis. Attenuates TLR4-mediated NF-kappa-B signaling by cooperating with beta-arrestin-2/ARRB2 and inhibiting TRAF6 autoubiquitination. Promotes cellular antiviral responses by deconjugating 'Lys-33' and 'Lys-48'-linked ubiquitination of STING1 leading to its stabilization. Plays an essential role in autophagy induction by regulating the ULK1 stability through deubiquitination of ULK1. Acts as a positive regulator for NF-kappa-B activation by TNF-alpha through deubiquitinating 'Lys-48'-linked polyubiquitination of SQSTM1, leading to its increased stability. Acts as a regulator of G-protein coupled receptor (GPCR) signaling by mediating the deubiquitination beta-2 adrenergic receptor (ADRB2). Plays a central role in ADRB2 recycling and resensitization after prolonged agonist stimulation by constitutively binding ADRB2, mediating deubiquitination of ADRB2 and inhibiting lysosomal trafficking of ADRB2. Upon dissociation, it is probably transferred to the translocated beta-arrestins, possibly leading to beta-arrestins deubiquitination and disengagement from ADRB2. This suggests the existence of a dynamic exchange between the ADRB2 and beta-arrestins. Deubiquitinates DIO2, thereby regulating thyroid hormone regulation. Deubiquitinates HIF1A, leading to stabilize HIF1A and enhance HIF1A-mediated activity. Deubiquitinates MCL1, a pivotal member of the anti-apoptotic Bcl-2 protein family to regulate its stability. Within the endoplasmic reticulum, participates with USP33 in the rescue of post-translationally targeted membrane proteins that are inappropriately ubiquitinated by the cytosolic protein quality control in the cytosol. The protein is Ubiquitin carboxyl-terminal hydrolase 20 (USP20) of Homo sapiens (Human).